The primary structure comprises 272 residues: Proteasome subunit beta (272 aa).

Positions 1-47 (MSTGGDRLPEAFLRPGSSSFVEFLREVAPQSHPEHARPAGAGDVVHA) are cleaved as a propeptide — removed in mature form; by autocatalysis. The active-site Nucleophile is the Thr-48.

Belongs to the peptidase T1B family. The 20S proteasome core is composed of 14 alpha and 14 beta subunits that assemble into four stacked heptameric rings, resulting in a barrel-shaped structure. The two inner rings, each composed of seven catalytic beta subunits, are sandwiched by two outer rings, each composed of seven alpha subunits. The catalytic chamber with the active sites is on the inside of the barrel. Has a gated structure, the ends of the cylinder being occluded by the N-termini of the alpha-subunits. Is capped by the proteasome-associated ATPase, ARC.

It localises to the cytoplasm. It catalyses the reaction Cleavage of peptide bonds with very broad specificity.. The protein operates within protein degradation; proteasomal Pup-dependent pathway. Its activity is regulated as follows. The formation of the proteasomal ATPase ARC-20S proteasome complex, likely via the docking of the C-termini of ARC into the intersubunit pockets in the alpha-rings, may trigger opening of the gate for substrate entry. Interconversion between the open-gate and close-gate conformations leads to a dynamic regulation of the 20S proteasome proteolysis activity. Functionally, component of the proteasome core, a large protease complex with broad specificity involved in protein degradation. In Beutenbergia cavernae (strain ATCC BAA-8 / DSM 12333 / CCUG 43141 / JCM 11478 / NBRC 16432 / NCIMB 13614 / HKI 0122), this protein is Proteasome subunit beta.